Consider the following 521-residue polypeptide: Alkyl hydroperoxide reductase subunit F (521 aa).

An N6-acetyllysine modification is found at lysine 53. 214–229 contacts FAD; sequence DVLIVGSGPAGAAAAI. A disulfide bridge connects residues cysteine 345 and cysteine 348. Lysine 354 bears the N6-acetyllysine mark. 357 to 371 is an NAD(+) binding site; sequence RVAVIGGGNSGVEAA. FAD is bound at residue 478–488; the sequence is TNVKGVFAAGD.

The protein belongs to the class-II pyridine nucleotide-disulfide oxidoreductase family. Homodimer. FAD serves as cofactor.

Functionally, serves to protect the cell against DNA damage by alkyl hydroperoxides. It can use either NADH or NADPH as electron donor for direct reduction of redox dyes or of alkyl hydroperoxides when combined with the AhpC protein. The polypeptide is Alkyl hydroperoxide reductase subunit F (ahpF) (Escherichia coli (strain K12)).